Consider the following 299-residue polypeptide: Probable lipid kinase YegS (299 aa).

Residues 2–133 enclose the DAGKc domain; it reads ANFPASLLIL…IDMAMVNDKT (132 aa). Residues Thr40, 66-72, and Thr95 contribute to the ATP site; that span reads GDGTINE. Residues Leu215, Asp218, and Leu220 each contribute to the Mg(2+) site. The Proton acceptor role is filled by Glu271.

The protein belongs to the diacylglycerol/lipid kinase family. YegS lipid kinase subfamily. Mg(2+) serves as cofactor. Requires Ca(2+) as cofactor.

The protein resides in the cytoplasm. Functionally, probably phosphorylates lipids; the in vivo substrate is unknown. The chain is Probable lipid kinase YegS from Salmonella choleraesuis (strain SC-B67).